Here is a 386-residue protein sequence, read N- to C-terminus: Methionine import ATP-binding protein MetN 2 (386 aa).

The 241-residue stretch at 32-272 folds into the ABC transporter domain; sequence VIFDDVGKVF…PQHDATRALL (241 aa). Residue 69 to 76 coordinates ATP; the sequence is GRSGAGKS.

This sequence belongs to the ABC transporter superfamily. Methionine importer (TC 3.A.1.24) family. In terms of assembly, the complex is composed of two ATP-binding proteins (MetN), two transmembrane proteins (MetI) and a solute-binding protein (MetQ).

Its subcellular location is the cell inner membrane. It catalyses the reaction L-methionine(out) + ATP + H2O = L-methionine(in) + ADP + phosphate + H(+). The catalysed reaction is D-methionine(out) + ATP + H2O = D-methionine(in) + ADP + phosphate + H(+). Functionally, part of the ABC transporter complex MetNIQ involved in methionine import. Responsible for energy coupling to the transport system. In Paraburkholderia xenovorans (strain LB400), this protein is Methionine import ATP-binding protein MetN 2.